The primary structure comprises 337 residues: Hsp90 co-chaperone Cdc37-like 1 (337 aa).

Positions 1-11 (MEQPWPPPGPW) are enriched in pro residues. The interval 1-43 (MEQPWPPPGPWSLPRAEGEAEEESDLDLSPGSPRCPQLPGGGT) is disordered. The segment at 2–171 (EQPWPPPGPW…HEQKIRHFGM (170 aa)) is self-association. 2 positions are modified to phosphoserine: S32 and S88. Residues 84-122 (HNSESLDQEHAKAQTAISELRQREEEWRQKEEALVQRER) adopt a coiled-coil conformation. The self-association and interaction with Hsp90 stretch occupies residues 147–277 (KETEDEDKSK…SRVRLYSQSP (131 aa)). The segment at 267-337 (KSRVRLYSQS…DDEPKMMDTV (71 aa)) is interaction with Hsp70. Residues 278-337 (NFQPVTVQNHVPHSGVGSIGLLESLPQNPDYLQYSINTALCSLNSVVHKEDDEPKMMDTV) form a required for interaction with STIP1 region.

It belongs to the CDC37 family. Self-associates. Forms complexes with Hsp70 and Hsp90. Interacts with CDC37, FKBP4, PPID and STIP1.

It localises to the cytoplasm. Its function is as follows. Co-chaperone that binds to numerous proteins and promotes their interaction with Hsp70 and Hsp90. The polypeptide is Hsp90 co-chaperone Cdc37-like 1 (CDC37L1) (Bos taurus (Bovine)).